A 280-amino-acid polypeptide reads, in one-letter code: MKMDVIAREQIIYGSLQGSNKNKDWTSRLPPPSAYTLDLMSKKAKTTTGGSSNGSNATATSTTTSTSSSIKHKQPAGSSNNNVGQSQSKKTKPSGSYNSNSNYYYYAADEEEGGSADYALSNYDKKAVEELSLRLLDELRAAKSRHLTCTEVSLPCDLTPSVAREIIRVSEKEPRGIRGCTIYIEFEDEPKNSRRIASIKVDSDTVSTFEVYLTLRQDHRGWTSLLPQFMKSLARTITISPEYTITKNKLYSADGLGARRSYSFGSHAHRPSAAIATPTN.

Positions 39 to 96 (LMSKKAKTTTGGSSNGSNATATSTTTSTSSSIKHKQPAGSSNNNVGQSQSKKTKPSGS) are disordered. 2 stretches are compositionally biased toward low complexity: residues 46-69 (TTTGGSSNGSNATATSTTTSTSSS) and 77-96 (GSSNNNVGQSQSKKTKPSGS).

The protein belongs to the DDIT4 family.

It is found in the cytoplasm. Its function is as follows. Inhibits cell growth by regulating the Tor pathway upstream of the Tsc1-Tsc2 complex and downstream of Akt1. Acts as a cell death activator during head development. The polypeptide is Protein scylla (scyl) (Drosophila melanogaster (Fruit fly)).